A 193-amino-acid polypeptide reads, in one-letter code: Ion-translocating oxidoreductase complex subunit A (193 aa).

Transmembrane regions (helical) follow at residues 5–25, 47–67, 72–92, 102–122, 134–154, and 171–191; these read LLLF…FLGL, FVMT…LIPL, LRTL…EMVV, LLGI…VALL, ALYG…FAAI, and AIAL…SGLV.

This sequence belongs to the NqrDE/RnfAE family. As to quaternary structure, the complex is composed of six subunits: RsxA, RsxB, RsxC, RsxD, RsxE and RsxG.

It localises to the cell inner membrane. Part of a membrane-bound complex that couples electron transfer with translocation of ions across the membrane. Required to maintain the reduced state of SoxR. This Salmonella agona (strain SL483) protein is Ion-translocating oxidoreductase complex subunit A.